Here is a 942-residue protein sequence, read N- to C-terminus: Isoleucine--tRNA ligase (942 aa).

The 'HIGH' region motif lies at 58–68 (PYANGDIHIGH). An L-isoleucyl-5'-AMP-binding site is contributed by Glu-566. The 'KMSKS' region signature appears at 607 to 611 (KMSKS). Lys-610 lines the ATP pocket. Zn(2+) contacts are provided by Cys-905, Cys-908, Cys-925, and Cys-928.

Belongs to the class-I aminoacyl-tRNA synthetase family. IleS type 1 subfamily. As to quaternary structure, monomer. The cofactor is Zn(2+).

The protein localises to the cytoplasm. It catalyses the reaction tRNA(Ile) + L-isoleucine + ATP = L-isoleucyl-tRNA(Ile) + AMP + diphosphate. Its function is as follows. Catalyzes the attachment of isoleucine to tRNA(Ile). As IleRS can inadvertently accommodate and process structurally similar amino acids such as valine, to avoid such errors it has two additional distinct tRNA(Ile)-dependent editing activities. One activity is designated as 'pretransfer' editing and involves the hydrolysis of activated Val-AMP. The other activity is designated 'posttransfer' editing and involves deacylation of mischarged Val-tRNA(Ile). In Vibrio campbellii (strain ATCC BAA-1116), this protein is Isoleucine--tRNA ligase.